A 197-amino-acid chain; its full sequence is Dermorphin-1 (197 aa).

A signal peptide spans M1–S20. Residues V21–M45 constitute a propeptide that is removed on maturation. Residues E24 to M197 form a disordered region. A compositionally biased stretch (acidic residues) spans E30 to H39. Residues E40–S62 are compositionally biased toward basic and acidic residues. M49 bears the D-methionine mark. The residue at position 54 (D54) is an Aspartic acid 1-amide. Positions E56–M77 are excised as a propeptide. Position 81 is a D-alanine (Ala) (A81). S86 is modified (serine amide). Positions E88 to E97 are enriched in basic and acidic residues. Positions E88–M112 are excised as a propeptide. A116 is modified (D-alanine (Ala)). S121 bears the Serine amide mark. The segment covering E123–E132 has biased composition (basic and acidic residues). The propeptide occupies E123–M147. A151 is subject to D-alanine (Ala). S156 carries the post-translational modification Serine amide. The propeptide occupies E158–M182. Over residues E167–H176 the composition is skewed to acidic residues. D-alanine (Ala) is present on A186. A Serine amide modification is found at S191. Residues E193–M197 constitute a propeptide that is removed on maturation.

Belongs to the frog skin active peptide (FSAP) family. Dermorphin subfamily. Expressed by the skin glands.

It is found in the secreted. In terms of biological role, dermorphin has a very potent opiate-like activity. It has high affinity and selectivity for mu-type opioid receptors. Functionally, deltorphin has a very potent opiate-like activity. It has high affinity and selectivity for delta-type opioid receptors. The chain is Dermorphin-1 from Phyllomedusa sauvagei (Sauvage's leaf frog).